Consider the following 468-residue polypeptide: Uronate isomerase (468 aa).

It belongs to the metallo-dependent hydrolases superfamily. Uronate isomerase family.

The catalysed reaction is D-glucuronate = D-fructuronate. The enzyme catalyses aldehydo-D-galacturonate = keto-D-tagaturonate. It participates in carbohydrate metabolism; pentose and glucuronate interconversion. The chain is Uronate isomerase from Bacteroides fragilis (strain ATCC 25285 / DSM 2151 / CCUG 4856 / JCM 11019 / LMG 10263 / NCTC 9343 / Onslow / VPI 2553 / EN-2).